Here is a 279-residue protein sequence, read N- to C-terminus: Probable phosphatase phospho1 (279 aa).

D41 (nucleophile) is an active-site residue. 2 residues coordinate Mg(2+): D41 and D43. D43 functions as the Proton donor in the catalytic mechanism. Substrate-binding residues include D52 and D133. A Mg(2+)-binding site is contributed by D215.

Belongs to the HAD-like hydrolase superfamily. PHOSPHO family. It depends on Mg(2+) as a cofactor.

It is found in the extracellular vesicle. It catalyses the reaction phosphoethanolamine + H2O = ethanolamine + phosphate. The enzyme catalyses phosphocholine + H2O = choline + phosphate. In terms of biological role, phosphatase that has a high activity toward phosphoethanolamine (PEA) and phosphocholine (PCho). Involved in the generation of inorganic phosphate for bone mineralization. The protein is Probable phosphatase phospho1 (phospho1) of Danio rerio (Zebrafish).